A 339-amino-acid chain; its full sequence is Methionine import ATP-binding protein MetN 2 (339 aa).

The 240-residue stretch at 2–241 (ISFNNVSKVY…PKTKTTQNFV (240 aa)) folds into the ABC transporter domain. 38–45 (GFSGAGKS) serves as a coordination point for ATP.

It belongs to the ABC transporter superfamily. Methionine importer (TC 3.A.1.24) family. The complex is composed of two ATP-binding proteins (MetN), two transmembrane proteins (MetI) and a solute-binding protein (MetQ).

It is found in the cell membrane. It catalyses the reaction L-methionine(out) + ATP + H2O = L-methionine(in) + ADP + phosphate + H(+). The catalysed reaction is D-methionine(out) + ATP + H2O = D-methionine(in) + ADP + phosphate + H(+). In terms of biological role, part of the ABC transporter complex MetNIQ involved in methionine import. Responsible for energy coupling to the transport system. The protein is Methionine import ATP-binding protein MetN 2 of Bacillus cereus (strain ZK / E33L).